Here is a 309-residue protein sequence, read N- to C-terminus: Cytochrome c biogenesis protein CcsA (309 aa).

8 consecutive transmembrane segments (helical) span residues 18 to 38 (LGIL…GAVF), 43 to 63 (FFIV…QLLF), 67 to 87 (ISGH…AWGI), 102 to 122 (IIPS…CFVL), 148 to 168 (VMLS…VLFI), 216 to 236 (SILI…VWAN), 250 to 267 (TWAF…HMRI), and 279 to 299 (LATS…FLGI).

Belongs to the CcmF/CycK/Ccl1/NrfE/CcsA family. May interact with ccs1.

It localises to the cellular thylakoid membrane. Required during biogenesis of c-type cytochromes (cytochrome c6 and cytochrome f) at the step of heme attachment. This is Cytochrome c biogenesis protein CcsA from Prochlorococcus marinus (strain MIT 9312).